A 258-amino-acid chain; its full sequence is Imidazole glycerol phosphate synthase subunit HisF (258 aa).

Active-site residues include D11 and D130.

This sequence belongs to the HisA/HisF family. In terms of assembly, heterodimer of HisH and HisF.

It localises to the cytoplasm. It catalyses the reaction 5-[(5-phospho-1-deoxy-D-ribulos-1-ylimino)methylamino]-1-(5-phospho-beta-D-ribosyl)imidazole-4-carboxamide + L-glutamine = D-erythro-1-(imidazol-4-yl)glycerol 3-phosphate + 5-amino-1-(5-phospho-beta-D-ribosyl)imidazole-4-carboxamide + L-glutamate + H(+). It functions in the pathway amino-acid biosynthesis; L-histidine biosynthesis; L-histidine from 5-phospho-alpha-D-ribose 1-diphosphate: step 5/9. In terms of biological role, IGPS catalyzes the conversion of PRFAR and glutamine to IGP, AICAR and glutamate. The HisF subunit catalyzes the cyclization activity that produces IGP and AICAR from PRFAR using the ammonia provided by the HisH subunit. This chain is Imidazole glycerol phosphate synthase subunit HisF, found in Nitrobacter winogradskyi (strain ATCC 25391 / DSM 10237 / CIP 104748 / NCIMB 11846 / Nb-255).